The following is a 48-amino-acid chain: U1-theraphotoxin-Agm1a (48 aa).

3 cysteine pairs are disulfide-bonded: cysteine 4-cysteine 34, cysteine 8-cysteine 40, and cysteine 22-cysteine 45. At methionine 44 the chain carries Methionine sulfoxide; partial.

Belongs to the neurotoxin 12 (Hwtx-2) family. 01 (Ap1a) subfamily. In terms of tissue distribution, expressed by the venom gland.

The protein resides in the secreted. Functionally, is toxic to both insects and mammals. Induces reversible paralysis when injected into S.frugiperda larvae. Reduces both the amplitude and frequency of responses from muscle (GF-TTM and GF-DLM) pathways in the D.melanogaster giant fiber circuit, suggesting an action at the neuromuscular junction, which is mediated by glutamatergic receptors. In mice, intracranial injection of 30 ug causes increased urination, myoclonus, hypermotility with circular movements followed by respiratory and generalized seizures resulting in death within 25-35 minutes of injection. The polypeptide is U1-theraphotoxin-Agm1a (Acanthoscurria gomesiana (Tarantula spider)).